The following is a 343-amino-acid chain: Inositol 2-dehydrogenase (343 aa).

This sequence belongs to the Gfo/Idh/MocA family. As to quaternary structure, homotetramer.

It catalyses the reaction myo-inositol + NAD(+) = scyllo-inosose + NADH + H(+). Functionally, involved in the oxidation of myo-inositol (MI) to 2-keto-myo-inositol (2KMI or 2-inosose). In Streptomyces avermitilis (strain ATCC 31267 / DSM 46492 / JCM 5070 / NBRC 14893 / NCIMB 12804 / NRRL 8165 / MA-4680), this protein is Inositol 2-dehydrogenase.